The sequence spans 317 residues: Probable pathogenesis-related protein CaO19.6200 (317 aa).

The first 23 residues, 1-23 (MKFLQSFPVILAVFSFAANLVSS), serve as a signal peptide directing secretion. Disordered stretches follow at residues 52-116 (RLET…TTVT) and 155-179 (PSAPKPQPQPQPQENNSGTNDDSQL). Residues 58 to 76 (PTSTTTTIVIPSSKPSSPE) are compositionally biased toward low complexity. Composition is skewed to polar residues over residues 84–116 (QPMFQSPSPVQITPSTTSINNAPSPTKPETTVT) and 168–179 (ENNSGTNDDSQL). N169 carries N-linked (GlcNAc...) asparagine glycosylation. Positions 187-297 (LEAHNIKRAS…GWGLYIICNY (111 aa)) constitute an SCP domain.

The protein belongs to the CRISP family.

Its subcellular location is the secreted. Functionally, secreted protein that acts as a virulence factor during infections. The sequence is that of Probable pathogenesis-related protein CaO19.6200 from Candida albicans (strain SC5314 / ATCC MYA-2876) (Yeast).